Consider the following 358-residue polypeptide: Nicotinate-nucleotide--dimethylbenzimidazole phosphoribosyltransferase (358 aa).

E314 functions as the Proton acceptor in the catalytic mechanism.

Belongs to the CobT family.

The catalysed reaction is 5,6-dimethylbenzimidazole + nicotinate beta-D-ribonucleotide = alpha-ribazole 5'-phosphate + nicotinate + H(+). It participates in nucleoside biosynthesis; alpha-ribazole biosynthesis; alpha-ribazole from 5,6-dimethylbenzimidazole: step 1/2. Its function is as follows. Catalyzes the synthesis of alpha-ribazole-5'-phosphate from nicotinate mononucleotide (NAMN) and 5,6-dimethylbenzimidazole (DMB). The chain is Nicotinate-nucleotide--dimethylbenzimidazole phosphoribosyltransferase from Mycobacterium ulcerans (strain Agy99).